A 441-amino-acid polypeptide reads, in one-letter code: Protein translocase subunit SecY (441 aa).

10 helical membrane-spanning segments follow: residues 18–38, 78–98, 124–144, 157–177, 180–200, 215–235, 272–292, 318–338, 382–402, and 403–423; these read ILFT…PSPG, AVGV…TVVI, IALA…GGLL, IFTL…VMWM, LITE…GIAA, GVVF…VVFV, VIPV…TQLI, LVYI…YVSI, IYLG…AGGT, and VQNL…GLDT.

It belongs to the SecY/SEC61-alpha family. Component of the Sec protein translocase complex. Heterotrimer consisting of SecY, SecE and SecG subunits. The heterotrimers can form oligomers, although 1 heterotrimer is thought to be able to translocate proteins. Interacts with the ribosome. Interacts with SecDF, and other proteins may be involved. Interacts with SecA.

The protein localises to the cell membrane. The central subunit of the protein translocation channel SecYEG. Consists of two halves formed by TMs 1-5 and 6-10. These two domains form a lateral gate at the front which open onto the bilayer between TMs 2 and 7, and are clamped together by SecE at the back. The channel is closed by both a pore ring composed of hydrophobic SecY resides and a short helix (helix 2A) on the extracellular side of the membrane which forms a plug. The plug probably moves laterally to allow the channel to open. The ring and the pore may move independently. In Mycobacterium bovis (strain ATCC BAA-935 / AF2122/97), this protein is Protein translocase subunit SecY.